We begin with the raw amino-acid sequence, 269 residues long: Shikimate dehydrogenase (NADP(+)) (269 aa).

Shikimate-binding positions include 22-24 (TLS) and Thr68. The active-site Proton acceptor is the Lys72. The shikimate site is built by Asn93 and Asp104. NADP(+)-binding positions include 128–132 (GAGGA), 152–157 (NRTNLR), and Phe210. A shikimate-binding site is contributed by Tyr212. Gly233 lines the NADP(+) pocket.

The protein belongs to the shikimate dehydrogenase family. Homodimer.

It carries out the reaction shikimate + NADP(+) = 3-dehydroshikimate + NADPH + H(+). Its pathway is metabolic intermediate biosynthesis; chorismate biosynthesis; chorismate from D-erythrose 4-phosphate and phosphoenolpyruvate: step 4/7. In terms of biological role, involved in the biosynthesis of the chorismate, which leads to the biosynthesis of aromatic amino acids. Catalyzes the reversible NADPH linked reduction of 3-dehydroshikimate (DHSA) to yield shikimate (SA). The sequence is that of Shikimate dehydrogenase (NADP(+)) from Saccharolobus islandicus (strain Y.N.15.51 / Yellowstone #2) (Sulfolobus islandicus).